A 383-amino-acid polypeptide reads, in one-letter code: tRNA-specific 2-thiouridylase MnmA (383 aa).

ATP is bound by residues 29–36 (GMSGGVDS) and Met-55. The tract at residues 115-117 (NPD) is interaction with target base in tRNA. Cys-120 functions as the Nucleophile in the catalytic mechanism. The cysteines at positions 120 and 217 are disulfide-linked. Gly-145 serves as a coordination point for ATP. Positions 167–169 (KDQ) are interaction with tRNA. Cys-217 (cysteine persulfide intermediate) is an active-site residue. The interval 329 to 330 (RY) is interaction with tRNA.

The protein belongs to the MnmA/TRMU family.

The protein localises to the cytoplasm. It catalyses the reaction S-sulfanyl-L-cysteinyl-[protein] + uridine(34) in tRNA + AH2 + ATP = 2-thiouridine(34) in tRNA + L-cysteinyl-[protein] + A + AMP + diphosphate + H(+). Catalyzes the 2-thiolation of uridine at the wobble position (U34) of tRNA, leading to the formation of s(2)U34. This Histophilus somni (strain 2336) (Haemophilus somnus) protein is tRNA-specific 2-thiouridylase MnmA.